Reading from the N-terminus, the 370-residue chain is Alpha-(1,3)-fucosyltransferase 7 (370 aa).

The Cytoplasmic segment spans residues 1–36 (MVQGCLCWRGCCDLKTSFPWVTNSRRLWMNCIGCNP). A helical; Signal-anchor for type II membrane protein membrane pass occupies residues 37–59 (VWRLRAWGCLAGGTTLMVIWLFW). Residues 60-370 (LLRSVPGGAP…YEDLESWFQA (311 aa)) lie on the Lumenal side of the membrane. N-linked (GlcNAc...) asparagine glycosylation occurs at Asn86. Cys96 and Cys104 are joined by a disulfide. N-linked (GlcNAc...) asparagine glycosylation is present at Asn109. A disulfide bridge connects residues Cys239 and Cys242. Asn319 is a glycosylation site (N-linked (GlcNAc...) asparagine). A disulfide bridge links Cys346 with Cys349.

This sequence belongs to the glycosyltransferase 10 family. Post-translationally, N-glycosylated. In terms of tissue distribution, expressed in lymph node and kidney.

The protein localises to the golgi apparatus. The protein resides in the golgi stack membrane. The enzyme catalyses an N-acetyl-alpha-neuraminyl-(2-&gt;3)-beta-D-galactosyl-(1-&gt;4)-N-acetyl-beta-D-glucosaminyl derivative + GDP-beta-L-fucose = an alpha-Neu5Ac-(2-&gt;3)-beta-D-Gal-(1-&gt;4)-[alpha-L-Fuc-(1-&gt;3)]-beta-D-GlcNAc derivative + GDP + H(+). The catalysed reaction is a neolactoside IV(3)-alpha-NeuAc-nLc4Cer + GDP-beta-L-fucose = a neolactoside IV(3)-alpha-NeuNAc,III(3)-alpha-Fuc-nLc4Cer + GDP + H(+). It carries out the reaction a neolactoside VI(3)-alpha-NeuNAc-nLc6Cer + GDP-beta-L-fucose = a neolactoside VI(3)-alpha-NeuAc,V(3)-alphaFuc-nLc6Cer + GDP + H(+). It catalyses the reaction an alpha-Neu5Ac-(2-&gt;3)-beta-D-Gal-(1-&gt;4)-beta-D-GlcNAc-(1-&gt;3)-beta-D-Gal-(1-&gt;4)-[alpha-L-Fuc-(1-&gt;3)]-beta-D-GlcNAc derivative + GDP-beta-L-fucose = an alpha-Neu5Ac-(2-&gt;3)-beta-D-Gal-(1-&gt;4)-[alpha-L-Fuc-(1-&gt;3)]-beta-D-GlcNAc-(1-&gt;3)-beta-D-Gal-(1-&gt;4)-[alpha-L-Fuc-(1-&gt;3)]-beta-D-GlcNAc derivative + GDP + H(+). The enzyme catalyses an alpha-Neu5Ac-(2-&gt;3)-beta-D-Gal-(1-&gt;4)-beta-D-GlcNAc6S derivative + GDP-beta-L-fucose = an alpha-Neu5Ac-(2-&gt;3)-beta-D-Gal-(1-&gt;4)-[alpha-L-Fuc-(1-&gt;3)]-beta-D-GlcNAc6S derivative + GDP + H(+). The catalysed reaction is alpha-Neu5Ac-(2-&gt;3)-beta-D-Gal-(1-&gt;4)-beta-D-GlcNAc-(1-&gt;3)-beta-D-Gal-(1-&gt;4)-D-Glc + GDP-beta-L-fucose = alpha-Neu5Ac-(2-&gt;3)-beta-D-Gal-(1-&gt;4)-[alpha-L-Fuc-(1-&gt;3)]-beta-D-GlcNAc-(1-&gt;3)-beta-D-Gal-(1-&gt;4)-D-Glc + GDP + H(+). It carries out the reaction alpha-Neu5Ac-(2-&gt;3)-beta-D-Gal-(1-&gt;4)-beta-D-GlcNAc-(1-&gt;3)-beta-D-Gal-(1-&gt;4)-[alpha-L-Fuc-(1-&gt;3)]-beta-D-GlcNAc-(1-&gt;3)-beta-D-Gal-(1-&gt;4)-beta-D-GlcNAc + GDP-beta-L-fucose = alpha-Neu5Ac-(2-&gt;3)-beta-D-Gal-(1-&gt;4)-[alpha-L-Fuc-(1-&gt;3)]-beta-D-GlcNAc-(1-&gt;3)-beta-D-Gal-(1-&gt;4)-[alpha-L-Fuc-(1-&gt;3)]-beta-D-GlcNAc-(1-&gt;3)-beta-D-Gal-(1-&gt;4)-beta-D-GlcNAc + GDP + H(+). It catalyses the reaction alpha-Neu5Ac-(2-&gt;3)-beta-D-Gal-(1-&gt;4)-beta-D-GlcNAc-(1-&gt;3)-beta-D-Gal-(1-&gt;4)-beta-D-GlcNAc-(1-&gt;3)-beta-D-Gal-(1-&gt;4)-beta-D-GlcNAc + GDP-beta-L-fucose = alpha-Neu5Ac-(2-&gt;3)-beta-D-Gal-(1-&gt;4)-[alpha-L-Fuc-(1-&gt;3)]-beta-D-GlcNAc-(1-&gt;3)-beta-D-Gal-(1-&gt;4)-beta-D-GlcNAc-(1-&gt;3)-beta-D-Gal-(1-&gt;4)-beta-D-GlcNAc + GDP + H(+). The protein operates within protein modification; protein glycosylation. Its activity is regulated as follows. Inhibited by NaCl. Inhibited by GDP in a concentration dependent manner, with an IC(50) value of 93 uM. Also inhibited by GMP and GTP. Inhibited by N-ethylmaleimide. Activated by poly(ethylene glycol) by enhancing the thermal stability of FUT7. Activated by Mn2+, Ca2+, and Mg2+. Both panosialin A and B inhibit activity with IC(50) values of 4.8 and 5.3 ug/ml, respectively. Inhibited by gallic acid (GA) and (-)-epigallocatechin gallate (EGCG) in a time-dependent and irreversible manner with IC(50) values of 60 and 700 nM, respectively. Functionally, catalyzes the transfer of L-fucose, from a guanosine diphosphate-beta-L-fucose, to the N-acetyl glucosamine (GlcNAc) of a distal alpha2,3 sialylated lactosamine unit of a glycoprotein or a glycolipid-linked sialopolylactosamines chain through an alpha-1,3 glycosidic linkage and participates in the final fucosylation step in the biosynthesis of the sialyl Lewis X (sLe(x)), a carbohydrate involved in cell and matrix adhesion during leukocyte trafficking and fertilization. In vitro, also synthesizes sialyl-dimeric-Lex structures, from VIM-2 structures and both di-fucosylated and trifucosylated structures from mono-fucosylated precursors. However does not catalyze alpha 1-3 fucosylation when an internal alpha 1-3 fucosylation is present in polylactosamine chain and the fucosylation rate of the internal GlcNAc residues is reduced once fucose has been added to the distal GlcNAc. Also catalyzes the transfer of a fucose from GDP-beta-fucose to the 6-sulfated a(2,3)sialylated substrate to produce 6-sulfo sLex mediating significant L-selectin-dependent cell adhesion. Through sialyl-Lewis(x) biosynthesis, can control SELE- and SELP-mediated cell adhesion with leukocytes and allows leukocytes tethering and rolling along the endothelial tissue thereby enabling the leukocytes to accumulate at a site of inflammation. May enhance embryo implantation through sialyl Lewis X (sLeX)-mediated adhesion of embryo cells to endometrium. May affect insulin signaling by up-regulating the phosphorylation and expression of some signaling molecules involved in the insulin-signaling pathway through SLe(x) which is present on the glycans of the INSRR alpha subunit. In Rattus norvegicus (Rat), this protein is Alpha-(1,3)-fucosyltransferase 7.